The sequence spans 59 residues: Large ribosomal subunit protein bL32 (59 aa).

Over residues 1-15 the composition is skewed to basic residues; sequence MAVPKRKTSKSKRDM. The interval 1-21 is disordered; that stretch reads MAVPKRKTSKSKRDMRRASNS.

Belongs to the bacterial ribosomal protein bL32 family.

The chain is Large ribosomal subunit protein bL32 from Alkaliphilus metalliredigens (strain QYMF).